A 452-amino-acid polypeptide reads, in one-letter code: MTDILWNFIAFIIALGILVAVHEFGHFWVARRCGVKVEKFSIGFGKSIWKRVGHDGTEYSISMIPLGGYVKMLDGRVDDVPAEQQAMAFDKQSLWKRSAIVSAGPIFNFLFAIFAYWLVFMIGVPAVKPVIGEVTPYSIAAQAGLEPGMEIKAVSGVNTPDWESVNMGLIGHIGDDSMTITVSSAEGVGLNEIKTINLRDWNFDPETESAMGALGFKPFTPEISNQLTNVSAQGAGERAGLQVGDTVLQINGQAVEAWQQVVNAIQSHPNAPIAVMVERAGQQVELTLIPDSRELSQGKVIGFAGIAPKVAEWPQNYRFELQFGVFESLGKAVEKSGQVIDLTVSMLKKLLVGDVGLNNLSGPISIAKGAGTTADYGFVYFLGFLALISINLGIINLVPLPMLDGGHLLFFMIEAVIRRPVPEKVQEMGYRIGGAIIFSLMAVAIFNDFTRL.

A Zn(2+)-binding site is contributed by His-22. Residue Glu-23 is part of the active site. Residue His-26 coordinates Zn(2+). Residues 98-120 (SAIVSAGPIFNFLFAIFAYWLVF) form a helical membrane-spanning segment. The region spanning 197–292 (NLRDWNFDPE…QVELTLIPDS (96 aa)) is the PDZ domain. A run of 2 helical transmembrane segments spans residues 378 to 400 (FVYF…LVPL) and 428 to 447 (MGYR…AIFN).

Belongs to the peptidase M50B family. Requires Zn(2+) as cofactor.

The protein resides in the cell inner membrane. This Vibrio cholerae serotype O1 (strain ATCC 39315 / El Tor Inaba N16961) protein is Putative zinc metalloprotease VC_2253.